Here is a 558-residue protein sequence, read N- to C-terminus: Arginine--tRNA ligase (558 aa).

Residues alanine 129–histidine 139 carry the 'HIGH' region motif.

Belongs to the class-I aminoacyl-tRNA synthetase family. In terms of assembly, monomer.

Its subcellular location is the cytoplasm. It carries out the reaction tRNA(Arg) + L-arginine + ATP = L-arginyl-tRNA(Arg) + AMP + diphosphate. The polypeptide is Arginine--tRNA ligase (Polaromonas naphthalenivorans (strain CJ2)).